The chain runs to 314 residues: uncharacterized protein (314 aa).

A signal peptide spans 1-24 (MKRRRRWRGWLLFPALCFCLLCEA). N-linked (GlcNAc...) asparagine; by host glycosylation is found at Asn28, Asn43, Asn57, Asn77, Asn101, Asn102, Asn109, Asn151, Asn170, Asn217, Asn223, Asn252, Asn255, and Asn268. A compositionally biased stretch (low complexity) spans 47 to 114 (ATTGTTTTSP…TIGTNATSPS (68 aa)). Residues 47–116 (ATTGTTTTSP…GTNATSPSPS (70 aa)) are disordered.

Belongs to the HHV-5 UL116 protein family. In terms of assembly, interacts with gH. Interacts with UL148. Post-translationally, highly glycosylated.

Its subcellular location is the virion. The protein localises to the host endoplasmic reticulum. Functionally, chaperone protein that cooperates with UL148 to regulate the abundance of gH complexes in virion. First interactor of gH in the host endoplasmic reticulum, regulates the early folding steps of virion assembly. Then, UL148 is recruited and favors the binding of gL. This is an uncharacterized protein from Homo sapiens (Human).